The chain runs to 94 residues: DNA-directed RNA polymerase subunit omega (94 aa).

It belongs to the RNA polymerase subunit omega family. The RNAP catalytic core consists of 2 alpha, 1 beta, 1 beta' and 1 omega subunit. When a sigma factor is associated with the core the holoenzyme is formed, which can initiate transcription.

The catalysed reaction is RNA(n) + a ribonucleoside 5'-triphosphate = RNA(n+1) + diphosphate. Promotes RNA polymerase assembly. Latches the N- and C-terminal regions of the beta' subunit thereby facilitating its interaction with the beta and alpha subunits. The polypeptide is DNA-directed RNA polymerase subunit omega (Frankia alni (strain DSM 45986 / CECT 9034 / ACN14a)).